Here is a 309-residue protein sequence, read N- to C-terminus: Elongation factor Ts (309 aa).

Residues 98-101 (TDFV) are involved in Mg(2+) ion dislocation from EF-Tu.

It belongs to the EF-Ts family.

It is found in the cytoplasm. Its function is as follows. Associates with the EF-Tu.GDP complex and induces the exchange of GDP to GTP. It remains bound to the aminoacyl-tRNA.EF-Tu.GTP complex up to the GTP hydrolysis stage on the ribosome. In Orientia tsutsugamushi (strain Boryong) (Rickettsia tsutsugamushi), this protein is Elongation factor Ts.